The sequence spans 282 residues: uncharacterized protein (282 aa).

Y50 (proton donor) is an active-site residue. Substrate is bound at residue H115.

It belongs to the aldo/keto reductase family.

This is an uncharacterized protein from Saccharomyces cerevisiae (strain ATCC 204508 / S288c) (Baker's yeast).